Consider the following 1252-residue polypeptide: Protein ITPRID2 (1252 aa).

Residues 28 to 70 (CRSSWQASETEDLSTETTTQDEDEDDEEDLPGTKLPAPAGRGN) are disordered. Positions 36–57 (ETEDLSTETTTQDEDEDDEEDL) are enriched in acidic residues. Thr-85 bears the Phosphothreonine mark. Phosphoserine occurs at positions 90, 109, 207, 268, and 328. Disordered stretches follow at residues 306 to 483 (DKTE…HVPA), 552 to 575 (HVTP…APLQ), and 595 to 636 (FPQC…GELP). The span at 357 to 372 (TVTEEVSGSSSTVTDS) shows a compositional bias: low complexity. Composition is skewed to basic and acidic residues over residues 395–407 (SREA…DPLR) and 415–428 (DLGH…HCEL). The segment covering 429–441 (ESSSELKSAQASS) has biased composition (low complexity). Ser-465 carries the phosphoserine modification. Phosphoserine occurs at positions 643, 667, 736, 738, 745, 758, and 766. A Glycyl lysine isopeptide (Lys-Gly) (interchain with G-Cter in SUMO2) cross-link involves residue Lys-807. Ser-866 and Ser-898 each carry phosphoserine. Residues 955–1031 (QELQVVRRSL…LLGLDEQLRA (77 aa)) adopt a coiled-coil conformation. A phosphoserine mark is found at Ser-1036, Ser-1051, Ser-1056, Ser-1059, and Ser-1114. Disordered stretches follow at residues 1095–1131 (GESS…GSKP) and 1147–1180 (ALTP…ASPV). Residues 1103 to 1117 (SQATSESSSVCSSPS) are compositionally biased toward low complexity. The residue at position 1149 (Thr-1149) is a Phosphothreonine. Positions 1151-1161 (TAPSRTGSVQT) are enriched in polar residues. Phosphoserine is present on Ser-1154. Thr-1161 is modified (phosphothreonine).

Its subcellular location is the cytoplasm. This Mus musculus (Mouse) protein is Protein ITPRID2 (Itprid2).